We begin with the raw amino-acid sequence, 91 residues long: UPF0298 protein M28_Spy0318 (91 aa).

This sequence belongs to the UPF0298 family.

The protein localises to the cytoplasm. The chain is UPF0298 protein M28_Spy0318 from Streptococcus pyogenes serotype M28 (strain MGAS6180).